The following is a 584-amino-acid chain: J protein JJJ2 (584 aa).

The J domain maps to 13 to 77; that stretch reads TYYSILGLTS…DQKLRYDRDL (65 aa). The disordered stretch occupies residues 216 to 312; sequence YSEDPNSCLG…FSSGSHDSNL (97 aa). Position 229 is a phosphoserine (Ser-229). Positions 241–253 are enriched in low complexity; it reads QQQQQQQQQQQQQ. Basic and acidic residues predominate over residues 269–282; the sequence is KDNKESKRESRVSP. A compositionally biased stretch (polar residues) spans 299-312; sequence KTSTFSSGSHDSNL.

It localises to the cytoplasm. The protein localises to the nucleus. This Saccharomyces cerevisiae (strain YJM789) (Baker's yeast) protein is J protein JJJ2 (JJJ2).